Here is a 439-residue protein sequence, read N- to C-terminus: Trigger factor (439 aa).

Residues 165 to 250 (GDFAKFDFEG…LHEIQELKLP (86 aa)) form the PPIase FKBP-type domain.

The protein belongs to the FKBP-type PPIase family. Tig subfamily.

Its subcellular location is the cytoplasm. It carries out the reaction [protein]-peptidylproline (omega=180) = [protein]-peptidylproline (omega=0). Functionally, involved in protein export. Acts as a chaperone by maintaining the newly synthesized protein in an open conformation. Functions as a peptidyl-prolyl cis-trans isomerase. This chain is Trigger factor, found in Campylobacter lari (strain RM2100 / D67 / ATCC BAA-1060).